A 311-amino-acid polypeptide reads, in one-letter code: MQPFDQPVIALRKKILELHDMAETQGLDFKEELNLLEERLRRLELDIYGNMKAWNRVQLARHPERPTTLDYVRLICDDFIELHGDRHGYDDAAIVGGIAMLNGQAVTVIGHQRGKDTKENIRRNFGMPHPEGYRKALRLMQQAVKFNRPIITFIDTKGAYPGRAAEERGQSEAIAKNLFEMAGMPVPIISIVIGEGGSGGALGIGVCDQLLMLENSTYSVISPEGAAALLWKDASLAEKAAESMQITAPDLLRLGIADGIISEVIGGAHLDVSLQADKLKSVLEQKLAQLTRLTPEQLIEKRTEKYHQIGT.

The CoA carboxyltransferase C-terminal domain maps to 32–289 (ELNLLEERLR…KSVLEQKLAQ (258 aa)).

Belongs to the AccA family. In terms of assembly, acetyl-CoA carboxylase is a heterohexamer composed of biotin carboxyl carrier protein (AccB), biotin carboxylase (AccC) and two subunits each of ACCase subunit alpha (AccA) and ACCase subunit beta (AccD).

It localises to the cytoplasm. It catalyses the reaction N(6)-carboxybiotinyl-L-lysyl-[protein] + acetyl-CoA = N(6)-biotinyl-L-lysyl-[protein] + malonyl-CoA. It participates in lipid metabolism; malonyl-CoA biosynthesis; malonyl-CoA from acetyl-CoA: step 1/1. In terms of biological role, component of the acetyl coenzyme A carboxylase (ACC) complex. First, biotin carboxylase catalyzes the carboxylation of biotin on its carrier protein (BCCP) and then the CO(2) group is transferred by the carboxyltransferase to acetyl-CoA to form malonyl-CoA. The polypeptide is Acetyl-coenzyme A carboxylase carboxyl transferase subunit alpha (Exiguobacterium sibiricum (strain DSM 17290 / CCUG 55495 / CIP 109462 / JCM 13490 / 255-15)).